The chain runs to 125 residues: uncharacterized protein (125 aa).

An N-terminal signal peptide occupies residues 1–21; the sequence is MIRNIIITISAILLLTSKGFA. A coiled-coil region spans residues 54 to 102; the sequence is KPEIREEIQKYRVEIVNINKKKRELYDKLSKEAQNFLAKEQEYKQRLSS. Residues 96-125 form a disordered region; that stretch reads YKQRLSSSSMATEDSKDNNTAKDNKDADKK. Basic and acidic residues predominate over residues 108-125; that stretch reads EDSKDNNTAKDNKDADKK.

This is an uncharacterized protein from Rickettsia bellii (strain RML369-C).